The chain runs to 190 residues: LIM domain-containing protein WLIM1 (190 aa).

An N-acetylalanine modification is found at A2. An LIM zinc-binding 1 domain is found at 8 to 68 (QKCMACDKTV…RPHFDQNFKR (61 aa)). A disordered region spans residues 74 to 98 (KSFEGTPKIGKPDRPLEGERPAGTK). The span at 83-95 (GKPDRPLEGERPA) shows a compositional bias: basic and acidic residues. The region spanning 108–168 (EKCVGCDKTV…KHHHIQLIKE (61 aa)) is the LIM zinc-binding 2 domain.

Interacts with F-actin. In terms of tissue distribution, expressed in roots, leaves, stems, flowers and siliques. Not detected in pollen.

Its subcellular location is the cytoplasm. It localises to the cytoskeleton. Its function is as follows. Binds to actin filaments and promotes cross-linking into thick bundles. Has an actin-stabilizing activity. The actin regulatory activities are not regulated by pH and [Ca(2+)]. The chain is LIM domain-containing protein WLIM1 from Arabidopsis thaliana (Mouse-ear cress).